Reading from the N-terminus, the 225-residue chain is Uracil-DNA glycosylase (225 aa).

Residue Asp-64 is the Proton acceptor of the active site.

Belongs to the uracil-DNA glycosylase (UDG) superfamily. UNG family.

It localises to the cytoplasm. It carries out the reaction Hydrolyzes single-stranded DNA or mismatched double-stranded DNA and polynucleotides, releasing free uracil.. Functionally, excises uracil residues from the DNA which can arise as a result of misincorporation of dUMP residues by DNA polymerase or due to deamination of cytosine. The chain is Uracil-DNA glycosylase from Agathobacter rectalis (strain ATCC 33656 / DSM 3377 / JCM 17463 / KCTC 5835 / VPI 0990) (Eubacterium rectale).